The chain runs to 378 residues: MNFELERSDLTKTIVVKIGTSSLTQPETGQLALSTIATLAETLSHLRQQGNRVILVSSGAVGVGCARLGLTERPKAIALKQAVAAVGQGRLMRVYDDLFTTLQQPIAQVLLTRSDLVQRSRYLNVYNTFRELLALGVIPVVNENDTVAVDELKFGDNDTLSALVASLVEADWLFLLTDVDRLYSADPRSVPDARPISLVTSIKELADLQVQTGSQGSQWGTGGMMTKISAARIAIAAGVRTVITQGRYPRNIEKIIQGELIGTHFQPQPEPTSARKRWIAYGLVPVGKLYLDSGAIAAIVKAGKSLLPAGVKTVAGEFEPQDAVQLCDPQGNEIARGLVNYSSNDLQKICGRHSKEIPTILGYVGAETVIHRDNLVLT.

Residue lysine 17 coordinates ATP. Substrate contacts are provided by serine 58, aspartate 145, and asparagine 157. ATP is bound by residues 177-178 (TD) and 221-227 (TGGMMTK). A PUA domain is found at 286–364 (VGKLYLDSGA…KEIPTILGYV (79 aa)).

The protein belongs to the glutamate 5-kinase family.

It is found in the cytoplasm. It carries out the reaction L-glutamate + ATP = L-glutamyl 5-phosphate + ADP. It functions in the pathway amino-acid biosynthesis; L-proline biosynthesis; L-glutamate 5-semialdehyde from L-glutamate: step 1/2. Its function is as follows. Catalyzes the transfer of a phosphate group to glutamate to form L-glutamate 5-phosphate. This Nostoc sp. (strain PCC 7120 / SAG 25.82 / UTEX 2576) protein is Glutamate 5-kinase.